The primary structure comprises 138 residues: Nucleoside diphosphate kinase (138 aa).

Residues Lys9, Phe57, Arg85, Thr91, Arg102, and Asn112 each contribute to the ATP site. Catalysis depends on His115, which acts as the Pros-phosphohistidine intermediate.

The protein belongs to the NDK family. As to quaternary structure, homotetramer. The cofactor is Mg(2+).

The protein localises to the cytoplasm. It catalyses the reaction a 2'-deoxyribonucleoside 5'-diphosphate + ATP = a 2'-deoxyribonucleoside 5'-triphosphate + ADP. The catalysed reaction is a ribonucleoside 5'-diphosphate + ATP = a ribonucleoside 5'-triphosphate + ADP. In terms of biological role, major role in the synthesis of nucleoside triphosphates other than ATP. The ATP gamma phosphate is transferred to the NDP beta phosphate via a ping-pong mechanism, using a phosphorylated active-site intermediate. The chain is Nucleoside diphosphate kinase from Deinococcus radiodurans (strain ATCC 13939 / DSM 20539 / JCM 16871 / CCUG 27074 / LMG 4051 / NBRC 15346 / NCIMB 9279 / VKM B-1422 / R1).